The sequence spans 240 residues: Probable transcriptional regulatory protein MADE_1004275 (240 aa).

The protein belongs to the TACO1 family.

Its subcellular location is the cytoplasm. In Alteromonas mediterranea (strain DSM 17117 / CIP 110805 / LMG 28347 / Deep ecotype), this protein is Probable transcriptional regulatory protein MADE_1004275.